The primary structure comprises 346 residues: Homeobox protein ceh-22 (346 aa).

Disordered regions lie at residues M1–L68 and L135–R190. Residues A9–S24 show a composition bias toward low complexity. Residues E25–T44 are compositionally biased toward polar residues. Over residues A49–A67 the composition is skewed to low complexity. Over residues L147–N156 the composition is skewed to polar residues. Acidic residues predominate over residues E166–D182. Positions K189–H248 form a DNA-binding region, homeobox.

It belongs to the NK-2 homeobox family.

It localises to the nucleus. Its function is as follows. Involved in combinatorial activation of gene expression in pharyngeal muscle. Specifically binds a site necessary for activity of the B subelement of myo-2 enhancer. Regulates distal tip cell fate. The polypeptide is Homeobox protein ceh-22 (ceh-22) (Caenorhabditis elegans).